The sequence spans 173 residues: Large ribosomal subunit protein uL10 (173 aa).

This sequence belongs to the universal ribosomal protein uL10 family. In terms of assembly, part of the ribosomal stalk of the 50S ribosomal subunit. The N-terminus interacts with L11 and the large rRNA to form the base of the stalk. The C-terminus forms an elongated spine to which L12 dimers bind in a sequential fashion forming a multimeric L10(L12)X complex.

In terms of biological role, forms part of the ribosomal stalk, playing a central role in the interaction of the ribosome with GTP-bound translation factors. This chain is Large ribosomal subunit protein uL10, found in Nitratidesulfovibrio vulgaris (strain ATCC 29579 / DSM 644 / CCUG 34227 / NCIMB 8303 / VKM B-1760 / Hildenborough) (Desulfovibrio vulgaris).